The chain runs to 595 residues: (E)-beta-ocimene synthase, chloroplastic (595 aa).

The transit peptide at 1 to 32 (MSTISINLMSIIRNPLHSKSKRALINKHPSSS) directs the protein to the chloroplast. Mn(2+) contacts are provided by D350 and D354. Residues 350-354 (DDVYD) carry the DDXXD motif motif. 2 homodimerization regions span residues 356-362 (YGTLDEL) and 428-465 (EEEWYESGYTPSLKEYLNNASISVGAIAVVIALELSIP). N493 and E501 together coordinate Mn(2+).

The protein belongs to the terpene synthase family. As to quaternary structure, homodimer. It depends on Mn(2+) as a cofactor. Mg(2+) is required as a cofactor. As to expression, expressed in peltate glandular trichomes. Present in flowers, leaves and stems.

It localises to the plastid. It is found in the chloroplast. The catalysed reaction is (2E)-geranyl diphosphate = (E)-beta-ocimene + diphosphate. Its pathway is secondary metabolite biosynthesis; terpenoid biosynthesis. In terms of biological role, involved in the biosynthesis of monoterpenes natural products. Monoterpene synthase that catalyzes mainly the formation of (E)-beta-ocimene and minor amounts of other monoterpenes (e.g. myrcene, (Z)-beta-ocimene, alpha- and gamma-terpinene) from geranyl diphosphate (GPP). This chain is (E)-beta-ocimene synthase, chloroplastic, found in Origanum vulgare (Wild marjoram).